Reading from the N-terminus, the 280-residue chain is P32 adhesin (280 aa).

The next 2 helical transmembrane spans lie at 13 to 37 (FIVL…ALVV) and 68 to 92 (WFIP…AIGL). The segment covering 114–128 (EQLQRISDQQEQQTV) has biased composition (polar residues). Disordered stretches follow at residues 114–149 (EQLQ…QPLQ) and 163–280 (FNPN…GLKP). 2 stretches are compositionally biased toward low complexity: residues 132–149 (PQQS…QPLQ) and 168–188 (QQRP…NFNP). Tandem repeats lie at residues 163–168 (FNPNMQ), 170–174 (RPGFN), 186–190 (FNPRM), 191–195 (NPNMQ), 196–200 (RPGFN), 199–204 (FNPNMQ), 206–210 (RPGFN), 222–226 (FNPRM), 227–231 (NPNMQ), 232–236 (RPGFN), 249–254 (FNPNMQ), 256–260 (RPGFN), and 259–264 (FNPNMQ). The 6 X 5 AA repeats of [FM]-N-P-N-M-Q stretch occupies residues 163 to 264 (FNPNMQQRPG…QRPGFNPNMQ (102 aa)). Positions 170–260 (RPGFNQPNQQ…PNMQQRPGFN (91 aa)) are 5 X 5 AA repeats of R-P-G-F-N. Positions 186-226 (FNPRMNPNMQRPGFNPNMQQRPGFNQPNQQFQPHNNFNPRM) are 2 X 5 AA repeats of F-N-P-R-M. Residues 204–224 (QQRPGFNQPNQQFQPHNNFNP) show a composition bias toward low complexity. Residues 235–257 (FNQPHPNQFAQPNNFNPNMQQRP) show a composition bias toward low complexity. Polar residues predominate over residues 261–271 (PNMQQRPNPSQ).

The protein localises to the cell projection. It is found in the attachment organelle membrane. Its function is as follows. Adhesin necessary for successful cytadherence and virulence. This Mycoplasma genitalium (strain ATCC 33530 / DSM 19775 / NCTC 10195 / G37) (Mycoplasmoides genitalium) protein is P32 adhesin.